The chain runs to 332 residues: Biotin synthase (332 aa).

One can recognise a Radical SAM core domain in the interval 53-282; that stretch reads YFGKKVKLNM…TKEIRISGGR (230 aa). C71, C75, and C78 together coordinate [4Fe-4S] cluster. Residues C115, C147, C207, and R277 each coordinate [2Fe-2S] cluster.

The protein belongs to the radical SAM superfamily. Biotin synthase family. In terms of assembly, homodimer. [4Fe-4S] cluster is required as a cofactor. The cofactor is [2Fe-2S] cluster.

It carries out the reaction (4R,5S)-dethiobiotin + (sulfur carrier)-SH + 2 reduced [2Fe-2S]-[ferredoxin] + 2 S-adenosyl-L-methionine = (sulfur carrier)-H + biotin + 2 5'-deoxyadenosine + 2 L-methionine + 2 oxidized [2Fe-2S]-[ferredoxin]. It functions in the pathway cofactor biosynthesis; biotin biosynthesis; biotin from 7,8-diaminononanoate: step 2/2. Its function is as follows. Catalyzes the conversion of dethiobiotin (DTB) to biotin by the insertion of a sulfur atom into dethiobiotin via a radical-based mechanism. The protein is Biotin synthase of Bacillus thuringiensis (strain Al Hakam).